A 514-amino-acid chain; its full sequence is Na(+)/H(+) antiporter NhaB (514 aa).

12 helical membrane-spanning segments follow: residues 23-43 (LALLVFLIVNPFIFLANPFIA), 63-83 (PLLPGGLLAIEAVIIGMTSAA), 97-117 (LLLMFMVAGIYFMKQLLLFIF), 120-140 (LLLSIRSKMVLSLAFCVAAAF), 144-164 (FLDALTVVAVVISVAVGFYGI), 202-222 (LMMHAGVGTALGGVMTMVGEP), 238-258 (FFLRMSPVTVPVLVCGLLTCM), 303-323 (AVIGVWLVTALALHLAEVGLI), 357-377 (LTVFFSIVAVIIDQHLFAPII), 391-411 (LFYLFNGLLSSISDNVFVGTI), 447-467 (ATPNGQAAFLFLLTSALAPLI), and 475-495 (VWMALPYTIVLTLIGLLCVEF).

It belongs to the NhaB Na(+)/H(+) (TC 2.A.34) antiporter family.

Its subcellular location is the cell inner membrane. The enzyme catalyses 2 Na(+)(in) + 3 H(+)(out) = 2 Na(+)(out) + 3 H(+)(in). Na(+)/H(+) antiporter that extrudes sodium in exchange for external protons. The protein is Na(+)/H(+) antiporter NhaB of Salmonella gallinarum (strain 287/91 / NCTC 13346).